The following is a 478-amino-acid chain: Alcohol dehydrogenase (quinone), cytochrome c subunit (478 aa).

The first 36 residues, 1-36 (MLNALTRDRLVSEMKQGWKLAAAIGLMAVSFGAAHA), serve as a signal peptide directing secretion. The residue at position 37 (Gln37) is a Pyrrolidone carboxylic acid. Cytochrome c domains follow at residues 42-145 (ALIK…MHGV), 189-304 (PEVA…KSMP), and 327-417 (GQGN…RKGW). Residues Cys56, Cys59, His60, Cys204, Cys207, His208, Cys340, Cys343, and His344 each coordinate heme c.

As to quaternary structure, the alcohol dehydrogenase multicomponent enzyme system is composed of a dehydrogenase subunit I (AdhA), a cytochrome c subunit II (AdhB) and a subunit III (AdhS). Heme c serves as cofactor.

It localises to the cell membrane. It catalyses the reaction ethanol + a ubiquinone = a ubiquinol + acetaldehyde. With respect to regulation, 2,6-dichloro-4-dicyanovinylphenol (PC16) and antimycin A inhibit ubiquinol oxidation activity more selectively than the ubiquinone reductase activity. Its function is as follows. Cytochrome c component of the alcohol dehydrogenase multicomponent enzyme system which is involved in the production of acetic acid and in the ethanol oxidase respiratory chain. Quinohemoprotein alcohol dehydrogenase (ADH) catalyzes the oxidation of ethanol to acetaldehyde by transferring electrons to the ubiquinone embedded in the membrane phospholipids. The electrons transfer from ethanol to membranous ubiquinone occurs from pyrroloquinoline quinone (PQQ) to one heme c in subunit I (AdhA), and finally to two heme c in subunit II (AdhB). Besides ubiquinone reduction, ADH also has a ubiquinol (QH2) oxidation reaction which mediates electron transfer from ubiquinol to the non-energy generating bypass oxidase system. The electrons transfer occurs from ubiquinol (QH2) to the additional heme c within subunit II (AdhB). Also able to use quinone analogs such as 2,3-dimethoxy-5-methyl-6-n-decyl-1,4-benzoquinone (DB) and 2,3-dimethoxy-5-methyl-6-n-pentyl-1,4-benzoquinone (PB). In Gluconobacter oxydans (strain 621H) (Gluconobacter suboxydans), this protein is Alcohol dehydrogenase (quinone), cytochrome c subunit.